Here is a 661-residue protein sequence, read N- to C-terminus: PAN2-PAN3 deadenylation complex subunit pan3 (661 aa).

Disordered stretches follow at residues 1–29 and 53–131; these read MASVGKPSLEDARRGTGSPKMKARENAKD and DPHK…RQDA. A C3H1-type zinc finger spans residues 26-55; that stretch reads NAKDTLCRNVTIYGRCRYEDKGCAFNHDPH. The PABPC-interacting motif-2 (PAM-2) motif lies at 63-83; it reads NASKKRFNVDSPSFTPSLLPS. Residues 77 to 104 show a composition bias toward low complexity; that stretch reads TPSLLPSNGSSPTSSSSSLKKSSTISPK. Polar residues predominate over residues 115–126; it reads TAASRSNTSTPG. A pseudokinase domain region spans residues 263 to 524; it reads QTLPNTQLPA…NIDILINGIS (262 aa). ATP contacts are provided by residues arginine 315, 364–371, and 424–425; these read DYHPLSKT and SK. The stretch at 525 to 563 forms a coiled coil; it reads SQLMSTFDSALHLDDQLTSDLGRELENGRLVRLLTKLNF. The tract at residues 564-661 is knob domain; it reads INERPEHEHD…ALLRPSRRPH (98 aa).

Belongs to the protein kinase superfamily. PAN3 family. As to quaternary structure, homodimer. Forms a heterotrimer with a catalytic subunit pan2 to form the poly(a)-nuclease (PAN) deadenylation complex. Interacts (via PAM-2 motif) with poly(A)-binding protein pab1 (via PABC domain), conferring substrate specificity of the enzyme complex.

Its subcellular location is the cytoplasm. Regulatory subunit of the poly(A)-nuclease (PAN) deadenylation complex, one of two cytoplasmic mRNA deadenylases involved in mRNA turnover. PAN specifically shortens poly(A) tails of RNA and the activity is stimulated by poly(A)-binding protein pab1. PAN deadenylation is followed by rapid degradation of the shortened mRNA tails by the CCR4-NOT complex. Deadenylated mRNAs are then degraded by two alternative mechanisms, namely exosome-mediated 3'-5' exonucleolytic degradation, or deadenylation-dependent mRNA decaping and subsequent 5'-3' exonucleolytic degradation by XRN1. May also be involved in post-transcriptional maturation of mRNA poly(A) tails. pan3 acts as a positive regulator for PAN activity, recruiting the catalytic subunit pan2 to mRNA via its interaction with RNA and with pab1. The chain is PAN2-PAN3 deadenylation complex subunit pan3 from Emericella nidulans (strain FGSC A4 / ATCC 38163 / CBS 112.46 / NRRL 194 / M139) (Aspergillus nidulans).